The chain runs to 317 residues: Transaldolase (317 aa).

K132 acts as the Schiff-base intermediate with substrate in catalysis.

This sequence belongs to the transaldolase family. Type 1 subfamily.

Its subcellular location is the cytoplasm. It catalyses the reaction D-sedoheptulose 7-phosphate + D-glyceraldehyde 3-phosphate = D-erythrose 4-phosphate + beta-D-fructose 6-phosphate. It functions in the pathway carbohydrate degradation; pentose phosphate pathway; D-glyceraldehyde 3-phosphate and beta-D-fructose 6-phosphate from D-ribose 5-phosphate and D-xylulose 5-phosphate (non-oxidative stage): step 2/3. Its function is as follows. Transaldolase is important for the balance of metabolites in the pentose-phosphate pathway. The sequence is that of Transaldolase from Haemophilus influenzae (strain ATCC 51907 / DSM 11121 / KW20 / Rd).